The sequence spans 965 residues: Probable serine/threonine-protein kinase DDB_G0291516 (965 aa).

A disordered region spans residues 114 to 170 (KDSQKELLPSPQQLTPPTSLPSLPLLPLPQAPEQNEEQQLTQPPSPPSIPPPPPQKK). 2 stretches are compositionally biased toward low complexity: residues 119–136 (ELLP…LPSL) and 144–155 (APEQNEEQQLTQ). Pro residues predominate over residues 156-168 (PPSPPSIPPPPPQ). 2 ANK repeats span residues 271–301 (KGET…HMGI) and 310–339 (LNKN…PLKM). The Protein kinase domain maps to 459-739 (IDFHTQIGSA…NVKAIKKEFL (281 aa)). Residues 465-473 (IGSAGNASV) and Lys-486 contribute to the ATP site. Asp-587 functions as the Proton acceptor in the catalytic mechanism. A helical transmembrane segment spans residues 653–673 (IYSLGIILWELVCVAMTGTYI). N-linked (GlcNAc...) asparagine glycosylation is found at Asn-760, Asn-765, Asn-905, Asn-909, Asn-910, Asn-914, Asn-934, and Asn-938. The segment covering 881–940 (NINKNKNNNNNNNNNNNNNNNINNNNTFNNSTNNNSNDNINIPYDFNNNNNNNNNSCNNS) has biased composition (low complexity). The interval 881 to 942 (NINKNKNNNN…NNNSCNNSKK (62 aa)) is disordered.

Belongs to the protein kinase superfamily. Ser/Thr protein kinase family.

It localises to the membrane. It carries out the reaction L-seryl-[protein] + ATP = O-phospho-L-seryl-[protein] + ADP + H(+). The catalysed reaction is L-threonyl-[protein] + ATP = O-phospho-L-threonyl-[protein] + ADP + H(+). This chain is Probable serine/threonine-protein kinase DDB_G0291516, found in Dictyostelium discoideum (Social amoeba).